A 146-amino-acid chain; its full sequence is Large ribosomal subunit protein uL16 (146 aa).

It belongs to the universal ribosomal protein uL16 family. Part of the 50S ribosomal subunit.

Its function is as follows. Binds 23S rRNA and is also seen to make contacts with the A and possibly P site tRNAs. The sequence is that of Large ribosomal subunit protein uL16 from Thermomicrobium roseum (strain ATCC 27502 / DSM 5159 / P-2).